We begin with the raw amino-acid sequence, 76 residues long: U1-cyrtautoxin-As1d (76 aa).

Disulfide bonds link Cys23-Cys37, Cys30-Cys51, Cys36-Cys66, and Cys69-Cys76.

Belongs to the neurotoxin 21 family. In terms of tissue distribution, expressed by the venom gland.

It localises to the secreted. In terms of biological role, neurotoxin with probable ion channel impairing activity. In vivo, is both paralytic and lethal, when injected into lepidopteran larvae. The chain is U1-cyrtautoxin-As1d from Apomastus schlingeri (Trap-door spider).